We begin with the raw amino-acid sequence, 154 residues long: Large ribosomal subunit protein uL30 (154 aa).

The protein belongs to the universal ribosomal protein uL30 family. In terms of assembly, part of the 50S ribosomal subunit.

This is Large ribosomal subunit protein uL30 from Methanocaldococcus jannaschii (strain ATCC 43067 / DSM 2661 / JAL-1 / JCM 10045 / NBRC 100440) (Methanococcus jannaschii).